A 400-amino-acid chain; its full sequence is Acetate kinase (400 aa).

Residue Asn10 participates in Mg(2+) binding. Residue Lys17 participates in ATP binding. Arg91 lines the substrate pocket. Asp150 acts as the Proton donor/acceptor in catalysis. ATP-binding positions include 210 to 214 (HLGNG), 285 to 287 (DCR), and 333 to 337 (GIGEN). Glu387 is a binding site for Mg(2+).

It belongs to the acetokinase family. Homodimer. Mg(2+) serves as cofactor. It depends on Mn(2+) as a cofactor.

It is found in the cytoplasm. The catalysed reaction is acetate + ATP = acetyl phosphate + ADP. It functions in the pathway metabolic intermediate biosynthesis; acetyl-CoA biosynthesis; acetyl-CoA from acetate: step 1/2. Catalyzes the formation of acetyl phosphate from acetate and ATP. Can also catalyze the reverse reaction. The sequence is that of Acetate kinase from Serratia proteamaculans (strain 568).